Here is a 376-residue protein sequence, read N- to C-terminus: Mitogen-activated protein kinase 6 (376 aa).

Residues 43-329 form the Protein kinase domain; sequence APPIRPIGRG…VDEALHHPYL (287 aa). ATP is bound by residues 49–57 and Lys72; that span reads IGRGAYGIV. The Proton acceptor role is filled by Asp169. Thr201 is subject to Phosphothreonine. The TXY signature appears at 201 to 203; it reads TEY. Tyr203 is modified (phosphotyrosine).

It belongs to the protein kinase superfamily. CMGC Ser/Thr protein kinase family. MAP kinase subfamily. Dually phosphorylated on Thr-201 and Tyr-203, which activates the enzyme.

The enzyme catalyses L-seryl-[protein] + ATP = O-phospho-L-seryl-[protein] + ADP + H(+). It catalyses the reaction L-threonyl-[protein] + ATP = O-phospho-L-threonyl-[protein] + ADP + H(+). Its activity is regulated as follows. Activated by threonine and tyrosine phosphorylation. The sequence is that of Mitogen-activated protein kinase 6 (MPK6) from Oryza sativa subsp. japonica (Rice).